Consider the following 391-residue polypeptide: MAIINMSDLDLQGKRVLIREDLNVPVSNGVVTSDARLRASLPTIELALAKGAAVMVMSHLGRPTEGEYNPEYSMQPVVDYLAKALSCPVSLATDYLDGVDVAVGEVVVFENVRFNVGEGKNNEELSQKMAALCDVYVMDAFGTAHRAQASTHGVGMFAPIACAGPLLAQELDALGKALDNPARPMVAIVGGSKVSTKLTVLESLSGIVDQLVVGGGIANTFIAAAGYNVGKSLYEADLIDEAKRLVANAKSRGADIPVPTDVVVAGEFSPTAAATLKSVSEVADSEMIFDIGPDSAEALAKIIESAGTIVWNGPVGVFEFDQFGEGTKRIAQAIADSKAFSIAGGGDTLAAVDKYGIADKVSYISTGGGAFLEFLEGKELPAVAMLEKRGA.

Substrate-binding positions include 21-23 (DLN), Arg-36, 59-62 (HLGR), Arg-113, and Arg-146. ATP is bound by residues Lys-197, Glu-319, and 345-348 (GGDT).

It belongs to the phosphoglycerate kinase family. Monomer.

The protein localises to the cytoplasm. The enzyme catalyses (2R)-3-phosphoglycerate + ATP = (2R)-3-phospho-glyceroyl phosphate + ADP. The protein operates within carbohydrate degradation; glycolysis; pyruvate from D-glyceraldehyde 3-phosphate: step 2/5. This is Phosphoglycerate kinase from Shewanella baltica (strain OS185).